We begin with the raw amino-acid sequence, 505 residues long: Maturase K (505 aa).

The protein belongs to the intron maturase 2 family. MatK subfamily.

The protein localises to the plastid. Its subcellular location is the chloroplast. Usually encoded in the trnK tRNA gene intron. Probably assists in splicing its own and other chloroplast group II introns. The polypeptide is Maturase K (Kunzea capitata (Pink kunzea)).